Here is a 218-residue protein sequence, read N- to C-terminus: 1-Cys peroxiredoxin PER1 (218 aa).

A Thioredoxin domain is found at 4-164 (LTIGDTVPNL…VVRAVDSLLT (161 aa)). Cys46 (cysteine sulfenic acid (-SOH) intermediate) is an active-site residue. The Bipartite nuclear localization signal signature appears at 194 to 217 (KKMFPQGFETADLPSKKGYLRFTK).

This sequence belongs to the peroxiredoxin family. Prx6 subfamily. As to expression, embryo and aleurone cells.

Its subcellular location is the nucleus. The protein resides in the cytoplasm. The catalysed reaction is a hydroperoxide + [thioredoxin]-dithiol = an alcohol + [thioredoxin]-disulfide + H2O. In terms of biological role, thiol-specific peroxidase that catalyzes the reduction of hydrogen peroxide and organic hydroperoxides to water and alcohols, respectively. Seems to contribute to the inhibition of germination during stress. This chain is 1-Cys peroxiredoxin PER1 (PER1), found in Hordeum vulgare (Barley).